Reading from the N-terminus, the 263-residue chain is Trans-aconitate 2-methyltransferase (263 aa).

This sequence belongs to the methyltransferase superfamily. Tam family.

The protein localises to the cytoplasm. It catalyses the reaction trans-aconitate + S-adenosyl-L-methionine = (E)-3-(methoxycarbonyl)pent-2-enedioate + S-adenosyl-L-homocysteine. In terms of biological role, catalyzes the S-adenosylmethionine monomethyl esterification of trans-aconitate. The chain is Trans-aconitate 2-methyltransferase from Mycobacterium marinum (strain ATCC BAA-535 / M).